The following is a 132-amino-acid chain: MYASFAPATWALLAYLFGALALCLLMLGLGRVLGGRSHGRAKNLPFESGVDSTGSSRLRFSVKYALVAMLFVIFGIEMPFLYLWAVSLRENGWAGFVEATLFVSLLLVGLFYLHRVGALDWSPERRRKKPHD.

Helical transmembrane passes span 10 to 30, 66 to 86, and 93 to 113; these read WALLAYLFGALALCLLMLGLG, LVAMLFVIFGIEMPFLYLWAV, and WAGFVEATLFVSLLLVGLFYL.

The protein belongs to the complex I subunit 3 family. In terms of assembly, NDH-1 is composed of 13 different subunits. Subunits NuoA, H, J, K, L, M, N constitute the membrane sector of the complex.

Its subcellular location is the cell inner membrane. The enzyme catalyses a quinone + NADH + 5 H(+)(in) = a quinol + NAD(+) + 4 H(+)(out). In terms of biological role, NDH-1 shuttles electrons from NADH, via FMN and iron-sulfur (Fe-S) centers, to quinones in the respiratory chain. The immediate electron acceptor for the enzyme in this species is believed to be ubiquinone. Couples the redox reaction to proton translocation (for every two electrons transferred, four hydrogen ions are translocated across the cytoplasmic membrane), and thus conserves the redox energy in a proton gradient. This is NADH-quinone oxidoreductase subunit A 2 from Pseudomonas aeruginosa (strain UCBPP-PA14).